The chain runs to 151 residues: Cell division protein SepF (151 aa).

Residues 31–53 (EEVEEPRRRSRTGVKQERETGQN) are disordered.

The protein belongs to the SepF family. Homodimer. Interacts with FtsZ.

The protein resides in the cytoplasm. Cell division protein that is part of the divisome complex and is recruited early to the Z-ring. Probably stimulates Z-ring formation, perhaps through the cross-linking of FtsZ protofilaments. Its function overlaps with FtsA. This chain is Cell division protein SepF, found in Halalkalibacterium halodurans (strain ATCC BAA-125 / DSM 18197 / FERM 7344 / JCM 9153 / C-125) (Bacillus halodurans).